Here is a 734-residue protein sequence, read N- to C-terminus: Photosystem I P700 chlorophyll a apoprotein A2 (734 aa).

A run of 8 helical transmembrane segments spans residues Ile-46 to Ala-69, Leu-135 to Gln-158, Leu-175 to Ile-199, Met-273 to Tyr-291, Leu-330 to Tyr-353, Ala-369 to Ile-395, Ala-417 to His-439, and Phe-517 to Val-535. The [4Fe-4S] cluster site is built by Cys-559 and Cys-568. 2 helical membrane-spanning segments follow: residues Ala-575–Trp-596 and Leu-643–Ile-665. Positions 654, 662, and 670 each coordinate chlorophyll a. Trp-671 contacts phylloquinone. A helical membrane pass occupies residues Leu-707–Ala-727.

This sequence belongs to the PsaA/PsaB family. As to quaternary structure, the PsaA/B heterodimer binds the P700 chlorophyll special pair and subsequent electron acceptors. PSI consists of a core antenna complex that captures photons, and an electron transfer chain that converts photonic excitation into a charge separation. The eukaryotic PSI reaction center is composed of at least 11 subunits. P700 is a chlorophyll a/chlorophyll a' dimer, A0 is one or more chlorophyll a, A1 is one or both phylloquinones and FX is a shared 4Fe-4S iron-sulfur center. serves as cofactor.

Its subcellular location is the plastid. The protein resides in the chloroplast thylakoid membrane. The enzyme catalyses reduced [plastocyanin] + hnu + oxidized [2Fe-2S]-[ferredoxin] = oxidized [plastocyanin] + reduced [2Fe-2S]-[ferredoxin]. Functionally, psaA and PsaB bind P700, the primary electron donor of photosystem I (PSI), as well as the electron acceptors A0, A1 and FX. PSI is a plastocyanin-ferredoxin oxidoreductase, converting photonic excitation into a charge separation, which transfers an electron from the donor P700 chlorophyll pair to the spectroscopically characterized acceptors A0, A1, FX, FA and FB in turn. Oxidized P700 is reduced on the lumenal side of the thylakoid membrane by plastocyanin. The sequence is that of Photosystem I P700 chlorophyll a apoprotein A2 from Pinus thunbergii (Japanese black pine).